The sequence spans 92 residues: Small ribosomal subunit protein uS19c (92 aa).

Belongs to the universal ribosomal protein uS19 family.

Its subcellular location is the plastid. The protein localises to the chloroplast. Functionally, protein S19 forms a complex with S13 that binds strongly to the 16S ribosomal RNA. In Nicotiana tomentosiformis (Tobacco), this protein is Small ribosomal subunit protein uS19c.